Consider the following 360-residue polypeptide: Phospho-N-acetylmuramoyl-pentapeptide-transferase (360 aa).

10 helical membrane passes run 26 to 46, 70 to 90, 97 to 117, 134 to 154, 167 to 187, 199 to 219, 236 to 256, 263 to 283, 288 to 308, and 338 to 358; these read AILG…WVIN, GTPT…TLLW, YVLA…VDDY, YFWQ…TAQI, GVAL…VVGF, GLAI…AYLV, AGEL…FLWF, VFMG…IAVI, IVFI…ILQV, and VIVR…ATLK.

The protein belongs to the glycosyltransferase 4 family. MraY subfamily. Mg(2+) is required as a cofactor.

It localises to the cell inner membrane. The catalysed reaction is UDP-N-acetyl-alpha-D-muramoyl-L-alanyl-gamma-D-glutamyl-meso-2,6-diaminopimeloyl-D-alanyl-D-alanine + di-trans,octa-cis-undecaprenyl phosphate = di-trans,octa-cis-undecaprenyl diphospho-N-acetyl-alpha-D-muramoyl-L-alanyl-D-glutamyl-meso-2,6-diaminopimeloyl-D-alanyl-D-alanine + UMP. It functions in the pathway cell wall biogenesis; peptidoglycan biosynthesis. In terms of biological role, catalyzes the initial step of the lipid cycle reactions in the biosynthesis of the cell wall peptidoglycan: transfers peptidoglycan precursor phospho-MurNAc-pentapeptide from UDP-MurNAc-pentapeptide onto the lipid carrier undecaprenyl phosphate, yielding undecaprenyl-pyrophosphoryl-MurNAc-pentapeptide, known as lipid I. This is Phospho-N-acetylmuramoyl-pentapeptide-transferase from Saccharophagus degradans (strain 2-40 / ATCC 43961 / DSM 17024).